A 426-amino-acid chain; its full sequence is MSVFSNILDENSRNLRNEIPCDDGIASPINDDDEEFLTKSNRVLLVGADSNSSLKNLMTQYSYQVTKYESGEEAMAFLMKNKHEIDLVIWDFHMPDINGLDALNIIGKQMDLPVVIMSHEYKKETVMESIKYGACDFLVKPVSKEVIAVLWRHVYRKRMSKSGLDKPGESGTVESDPDEYDDLEQDNLYESNEEGSKNTCDHKEEKSPTKKPRMQWTPELHHKFEVAVEKMGSLEKAFPKTILKYMQEELNVQGLTRNNVASHLQKYRQSSKKTCTPQEPQEDFVWGNAGPDVTLAASKTLLSSHATPSYLINNQAAPRGSYFMNNIPYPSTSCLPVNNNNCFMTNPSTYIDQFQHQLQQQQQHQQYQSTLNSISAMLTKQESRHVPSSAMENSEPLMIYNSNLPFGIDECFPPAGFNIFDQIGHN.

Positions 40–155 constitute a Response regulatory domain; sequence SNRVLLVGAD…VIAVLWRHVY (116 aa). D91 bears the 4-aspartylphosphate mark. A disordered region spans residues 161-216; sequence KSGLDKPGESGTVESDPDEYDDLEQDNLYESNEEGSKNTCDHKEEKSPTKKPRMQW. Positions 175–193 are enriched in acidic residues; the sequence is SDPDEYDDLEQDNLYESNE. The segment covering 194 to 208 has biased composition (basic and acidic residues); the sequence is EGSKNTCDHKEEKSP. The Nuclear localization signal motif lies at 210–213; the sequence is KKPR. The segment at residues 213–268 is a DNA-binding region (myb-like GARP); that stretch reads RMQWTPELHHKFEVAVEKMGSLEKAFPKTILKYMQEELNVQGLTRNNVASHLQKYR.

It belongs to the ARR family. Type-B subfamily. As to quaternary structure, binds the target DNA as a monomer. Post-translationally, two-component system major event consists of a His-to-Asp phosphorelay between a sensor histidine kinase (HK) and a response regulator (RR). In plants, the His-to-Asp phosphorelay involves an additional intermediate named Histidine-containing phosphotransfer protein (HPt). This multistep phosphorelay consists of a His-Asp-His-Asp sequential transfer of a phosphate group between first a His and an Asp of the HK protein, followed by the transfer to a conserved His of the HPt protein and finally the transfer to an Asp in the receiver domain of the RR protein. In terms of tissue distribution, predominantly expressed in mature pistil tip. Also detected in the shoot apical meristem as well as vascular tissue and hydathodes of the leaves.

It is found in the nucleus. Its function is as follows. Putative transcriptional activator that binds specifically to the DNA sequence 5'-[AG]GATT-3'. Functions as a response regulator involved in His-to-Asp phosphorelay signal transduction system. Phosphorylation of the Asp residue in the receiver domain activates the ability of the protein to promote the transcription of target genes. Could directly activate some type-A response regulators in response to cytokinins. The sequence is that of Putative two-component response regulator ARR20 (ARR20) from Arabidopsis thaliana (Mouse-ear cress).